The following is a 134-amino-acid chain: Small ribosomal subunit protein uS11 (134 aa).

This sequence belongs to the universal ribosomal protein uS11 family. In terms of assembly, part of the 30S ribosomal subunit. Interacts with proteins S7 and S18. Binds to IF-3.

Functionally, located on the platform of the 30S subunit, it bridges several disparate RNA helices of the 16S rRNA. Forms part of the Shine-Dalgarno cleft in the 70S ribosome. In Albidiferax ferrireducens (strain ATCC BAA-621 / DSM 15236 / T118) (Rhodoferax ferrireducens), this protein is Small ribosomal subunit protein uS11.